The primary structure comprises 480 residues: MNGEEEFFDAVTGFDSDNSSGEFSEANQKVTGMIDLDTSKNNRIGKTGERPSQENGIQKHRTSLPAPMFSRSDFSVWTILKKCVGLELSKITMPIAFNEPLSFLQRITEYMEHVYLIHRASCQPQPLERMQSVAAFAVSAVASQWERTGKPFNPLLGETYELIREDLGFRFISEQVSHHPPISAFHSEGLNHDFLFHGSIYPKLKFWGKSVEAEPRGTITLELLKHNEAYTWTNPTCCVHNVIIGKLWIEQYGTVEILNHRTGHKCVLHFKPCGLFGKELHKVEGHIQDKNKKKLFMIYGKWTECLWGIDPVSYESFKKQERRGDHLRKAKLDEDSGKADSDVADDVPVAQETVQVIPGSKLLWRINTRPPNSAQMYNFTSFTVSLNELETGMEKTLPPTDCRLRPDIRGMENGNMDLASQEKERLEEKQREARRERAKEEAEWQTRWFYPGNNPYTGTPDWLYAGDYFERNFSDCPDIY.

A disordered region spans residues 1 to 60 (MNGEEEFFDAVTGFDSDNSSGEFSEANQKVTGMIDLDTSKNNRIGKTGERPSQENGIQKH). Polar residues predominate over residues 15–30 (DSDNSSGEFSEANQKV). 2 positions are modified to phosphoserine: S19 and S20. A 1,2-diacyl-sn-glycero-3-phospho-(1D-myo-inositol-4,5-bisphosphate) contacts are provided by residues K90, 178 to 179 (HH), and 427 to 431 (EEKQR).

It belongs to the OSBP family. In terms of assembly, monomer. Homotetramer; phosphatidylinositol-4,5-bisphosphate binding promotes formation of stable tetramers. Interacts with DIAPH1. As to expression, widely expressed.

It is found in the cytoplasm. The protein localises to the cytosol. It localises to the lipid droplet. Its subcellular location is the cell membrane. Its function is as follows. Intracellular transport protein that binds sterols and phospholipids and mediates lipid transport between intracellular compartments. Increases plasma membrane cholesterol levels and decreases phosphatidylinositol-4,5-bisphosphate levels in the cell membrane. Binds phosphoinositides, such as phosphatidylinositol-4,5-bisphosphate. Exhibits strong binding to phosphatidic acid and weak binding to phosphatidylinositol 3-phosphate. Binds cholesterol, dehydroergosterol, 22(R)-hydroxycholesterol and 25-hydroxycholesterol (in vitro). This is Oxysterol-binding protein-related protein 2 (OSBPL2) from Homo sapiens (Human).